The chain runs to 143 residues: uncharacterized protein (143 aa).

The protein resides in the mitochondrion. This is an uncharacterized protein from Arabidopsis thaliana (Mouse-ear cress).